A 403-amino-acid chain; its full sequence is Peroxisomal membrane protein PEX13 (403 aa).

Positions 1 to 11 (MASQPPPPPKP) are enriched in pro residues. The tract at residues 1 to 68 (MASQPPPPPK…PSQQTGSSSV (68 aa)) is disordered. At 1–134 (MASQPPPPPK…SSRGAFQSIE (134 aa)) the chain is on the peroxisomal matrix side. The segment covering 59–68 (PSQQTGSSSV) has biased composition (polar residues). A helical transmembrane segment spans residues 135–155 (SIVHAFASVSMMMDATFSAVY). The segment at 145-233 (MMMDATFSAV…EDRAATSAKS (89 aa)) is targeting to peroxisomes. Residues 156–174 (NSFRAVLDVANHFSRLKIH) lie on the Cytoplasmic side of the membrane. Residues 175-192 (FTKVFSAFALVRTIRYLY) traverse the membrane as a helical segment. Positions 175 to 196 (FTKVFSAFALVRTIRYLYRRLQ) are interaction with PEX19. Residues 193–233 (RRLQRMLGLRRGSENEDLWAESEGTVACLGAEDRAATSAKS) lie on the Peroxisomal matrix side of the membrane. The chain crosses the membrane as a helical span at residues 234-254 (WPIFLFFAVILGGPYLIWKLL). At 255 to 403 (STHSDEVTDS…IGKDGEKQDL (149 aa)) the chain is on the cytoplasmic side. The SH3 domain maps to 272-336 (DDHVVARAEY…PANYVKILGK (65 aa)). S354 is modified (phosphoserine).

Belongs to the peroxin-13 family. In terms of assembly, interacts (via SH3 domain) with PEX14 (via SH3-binding motif); forming the PEX13-PEX14 docking complex. Interacts with PEX19.

Its subcellular location is the peroxisome membrane. Its function is as follows. Component of the PEX13-PEX14 docking complex, a translocon channel that specifically mediates the import of peroxisomal cargo proteins bound to PEX5 receptor. The PEX13-PEX14 docking complex forms a large import pore which can be opened to a diameter of about 9 nm. Mechanistically, PEX5 receptor along with cargo proteins associates with the PEX14 subunit of the PEX13-PEX14 docking complex in the cytosol, leading to the insertion of the receptor into the organelle membrane with the concomitant translocation of the cargo into the peroxisome matrix. Involved in the import of PTS1- and PTS2-type containing proteins. This chain is Peroxisomal membrane protein PEX13, found in Homo sapiens (Human).